Reading from the N-terminus, the 377-residue chain is MSNGIVIIGSGFAARQLVKNIRKQDASIPLTLIAADSMDEYNKPDLSHVISQGQRADDLTRQTAGEFAEQFNLLLFPQTWVTDIDAEARVVKSQNNQWQYDKLVLATGASAFVPPVPGRELMLTLNSQQEYRACETQLRDARRVLIVGGGLIGSELAMDFCRAGKMVTLIDNAASILASLMPPEVSSRLQHRLTEMGVHLLLKSQLQGLEKTDSGILATLDHQRSIEVDAVIAATGLRPETALARRAGLTINRGVCVDSYLQTSNADIYALGDCAEINGQVLPFLQPIQLSAMVLAKNLLGNNTPLKLPAMLVKIKTPELPLHLAGETQRQDLRWQINTERQGMVARGVDDADQLRAFVVSEDRMKEAFGLLKTLPV.

It belongs to the FAD-dependent oxidoreductase family. FAD serves as cofactor.

It localises to the cytoplasm. The catalysed reaction is 2 reduced [nitric oxide reductase rubredoxin domain] + NAD(+) + H(+) = 2 oxidized [nitric oxide reductase rubredoxin domain] + NADH. It functions in the pathway nitrogen metabolism; nitric oxide reduction. One of at least two accessory proteins for anaerobic nitric oxide (NO) reductase. Reduces the rubredoxin moiety of NO reductase. The chain is Nitric oxide reductase FlRd-NAD(+) reductase from Escherichia coli O157:H7.